Reading from the N-terminus, the 493-residue chain is Dipeptide permease D (493 aa).

13 consecutive transmembrane segments (helical) span residues 14–34 (VVALQIWEYFSFYGMRALLIL), 49–69 (ELFSAYCSLVYVTPILGGYLA), 91–111 (LVLGASEIAPTFLYLSLAIIV), 138–158 (GGFSLLYAAGNIGSIVAPIAC), 167–187 (WAMGFALAAIGMLAGLVIFLC), 212–232 (NWGWLLILLVAAPLLITVLFW), 235–255 (WSVYALIVATAIGLVVLAKIY), 267–287 (LGLIVTLTLFSMLFWAFAQQG), 312–332 (MFQSVNAFAVMLCGVVLAWLV), 344–364 (IWGKFALGLGLMSAGFCILTL), 379–399 (LMVLGLAVMGFAELFIDPVAM), 413–433 (VLTGIYMLLSGAIANYLAGVI), and 458–478 (VFEQITWGALACVGVVLLIWL).

This sequence belongs to the major facilitator superfamily. Proton-dependent oligopeptide transporter (POT/PTR) (TC 2.A.17) family. DtpD subfamily.

It localises to the cell inner membrane. In terms of biological role, probable proton-dependent permease that transports dipeptides. This chain is Dipeptide permease D, found in Salmonella typhimurium (strain 14028s / SGSC 2262).